The following is a 390-amino-acid chain: Pyruvate dehydrogenase E1 component subunit alpha, somatic form, mitochondrial (390 aa).

The transit peptide at 1–29 (MRKMLAAVSRVLSGASQKPASRVLVASRN) directs the protein to the mitochondrion. At lysine 63 the chain carries N6-acetyllysine; alternate. Lysine 63 bears the N6-succinyllysine; alternate mark. Residues histidine 92, tyrosine 118, arginine 119, alanine 157, glycine 165, valine 167, aspartate 196, glycine 197, alanine 198, asparagine 225, and tyrosine 227 each coordinate pyruvate. Positions 118 and 119 each coordinate thiamine diphosphate. Thiamine diphosphate contacts are provided by glycine 165, valine 167, aspartate 196, glycine 197, alanine 198, and asparagine 225. Aspartate 196 serves as a coordination point for Mg(2+). Residues asparagine 225 and tyrosine 227 each coordinate Mg(2+). Serine 232 is modified (phosphoserine; by PDK1). Lysine 244 is subject to N6-acetyllysine; alternate. Lysine 244 carries the post-translational modification N6-succinyllysine; alternate. Residue lysine 277 is modified to N6-succinyllysine. Histidine 292 is a thiamine diphosphate binding site. Serine 293 is subject to Phosphoserine; by PDK1, PDK2, PDK3 and PDK4. At serine 295 the chain carries Phosphoserine. Serine 300 carries the phosphoserine; by PDK1, PDK2, PDK3 and PDK4 modification. Tyrosine 301 is subject to Phosphotyrosine. N6-acetyllysine; alternate is present on lysine 313. The residue at position 313 (lysine 313) is an N6-succinyllysine; alternate. N6-acetyllysine occurs at positions 321 and 336. Residue lysine 385 is modified to N6-succinyllysine.

Heterotetramer of two PDHA1 and two PDHB subunits. The heterotetramer interacts with DLAT, and is part of the multimeric pyruvate dehydrogenase complex that contains multiple copies of pyruvate dehydrogenase (E1), dihydrolipoamide acetyltransferase (DLAT, E2) and lipoamide dehydrogenase (DLD, E3). These subunits are bound to an inner core composed of about 48 DLAT and 12 PDHX molecules. The cofactor is thiamine diphosphate. It depends on Mg(2+) as a cofactor. Phosphorylation at Ser-232, Ser-293 and Ser-300 by PDK family kinases inactivates the enzyme; for this phosphorylation at a single site is sufficient. Phosphorylation at Ser-293 interferes with access to active site, and thereby inactivates the enzyme. Dephosphorylation at all three sites, i.e. at Ser-232, Ser-293 and Ser-300, is required for reactivation. Post-translationally, acetylation alters the phosphorylation pattern. Deacetylated by SIRT3.

Its subcellular location is the mitochondrion matrix. The enzyme catalyses N(6)-[(R)-lipoyl]-L-lysyl-[protein] + pyruvate + H(+) = N(6)-[(R)-S(8)-acetyldihydrolipoyl]-L-lysyl-[protein] + CO2. With respect to regulation, pyruvate dehydrogenase activity is inhibited by phosphorylation of PDHA1; it is reactivated by dephosphorylation. In terms of biological role, the pyruvate dehydrogenase complex catalyzes the overall conversion of pyruvate to acetyl-CoA and CO(2), and thereby links the glycolytic pathway to the tricarboxylic cycle. The protein is Pyruvate dehydrogenase E1 component subunit alpha, somatic form, mitochondrial (PDHA1) of Macaca fascicularis (Crab-eating macaque).